The chain runs to 206 residues: MELKLLNENGQEGAVVNASDVVFGRDYNEALIHQVVVAYQANARQGNRAQKDREQVKHTTKKPWRQKGTGRARAGMSSSPLWRGGGRIFPNSPEENFSHKVNKKMHRAGLCSIFSQLAREGRLSVVEDIILEAPKTKLLADKFKTMGLDSVLIITDTVDENLYLASRNLPHVAIVEPRYADPLSLIYFKKVLVTKAAVAQIEELLS.

Positions 45–78 (QGNRAQKDREQVKHTTKKPWRQKGTGRARAGMSS) are disordered. Basic residues predominate over residues 58-70 (HTTKKPWRQKGTG).

Belongs to the universal ribosomal protein uL4 family. In terms of assembly, part of the 50S ribosomal subunit.

Functionally, one of the primary rRNA binding proteins, this protein initially binds near the 5'-end of the 23S rRNA. It is important during the early stages of 50S assembly. It makes multiple contacts with different domains of the 23S rRNA in the assembled 50S subunit and ribosome. Its function is as follows. Forms part of the polypeptide exit tunnel. The protein is Large ribosomal subunit protein uL4 of Burkholderia ambifaria (strain MC40-6).